Here is a 278-residue protein sequence, read N- to C-terminus: DNA adenine methylase (278 aa).

The S-adenosyl-L-methionine site is built by Trp-10, Lys-14, Asp-54, and Asp-181.

This sequence belongs to the N(4)/N(6)-methyltransferase family.

It catalyses the reaction a 2'-deoxyadenosine in DNA + S-adenosyl-L-methionine = an N(6)-methyl-2'-deoxyadenosine in DNA + S-adenosyl-L-homocysteine + H(+). An alpha subtype methylase, recognizes the double-stranded sequence 5'-GATC-3' and methylates A-2. May be involved in methyl-directed DNA mismatch repair, initiation of chromosome replication and gene expression. The protein is DNA adenine methylase (dam) of Salmonella typhimurium.